The following is a 428-amino-acid chain: MLKSVIENVHALEIFDSRGNPTVEVFVTLSNGVVGKAEVPSGASTGENEAVELRDGGSRLGGKGVMNAVNNVNTEINDALKGLDPHDQPNIDATMIALDGTPNKGRLGANAILGVSMATAAAAAKDNHQPLYRYLGGTDLEMPQTFHNVINGGEHADNGIDIQEFMITPVAKTSFRDGFEKIVNVYHTLKKVLEDMGYETGLGDEGGFAPNMKNSEEALKALHESIIKAGYKPGEDIAIACDCAASYFYNKEDGKYHLEGKVLTDEELADYYDKLLDEFPELISMEDPYDENDVEGMVKFTQSHKDRIQIVLDDFICTNPKLLNKAIHEGAGNASLIKLNQIGTVTETLETIRLSRKNGYNTMISHRSGETGDTFIADFAVAVNGGQLKTGAPARSERVEKYNRLLEIEEELGKGERLAFFPDNVDLD.

Q163 provides a ligand contact to (2R)-2-phosphoglycerate. Residue E205 is the Proton donor of the active site. Mg(2+) is bound by residues D242, E286, and D313. (2R)-2-phosphoglycerate-binding residues include K338, R367, S368, and K389. Catalysis depends on K338, which acts as the Proton acceptor.

It belongs to the enolase family. Mg(2+) serves as cofactor.

The protein resides in the cytoplasm. It localises to the secreted. The protein localises to the cell surface. The enzyme catalyses (2R)-2-phosphoglycerate = phosphoenolpyruvate + H2O. The protein operates within carbohydrate degradation; glycolysis; pyruvate from D-glyceraldehyde 3-phosphate: step 4/5. Catalyzes the reversible conversion of 2-phosphoglycerate (2-PG) into phosphoenolpyruvate (PEP). It is essential for the degradation of carbohydrates via glycolysis. This chain is Enolase 3, found in Lactobacillus johnsonii (strain CNCM I-12250 / La1 / NCC 533).